A 464-amino-acid chain; its full sequence is tRNA modification GTPase MnmE (464 aa).

Positions 25, 87, and 130 each coordinate (6S)-5-formyl-5,6,7,8-tetrahydrofolate. In terms of domain architecture, TrmE-type G spans 226 to 386 (GLSVVLAGQP…LRAELLRIAG (161 aa)). N236 is a binding site for K(+). GTP contacts are provided by residues 236–241 (NVGKSS), 255–261 (TPIAGTT), and 280–283 (DTAG). Residue S240 participates in Mg(2+) binding. K(+) is bound by residues T255, I257, and T260. T261 contacts Mg(2+). K464 lines the (6S)-5-formyl-5,6,7,8-tetrahydrofolate pocket.

It belongs to the TRAFAC class TrmE-Era-EngA-EngB-Septin-like GTPase superfamily. TrmE GTPase family. In terms of assembly, homodimer. Heterotetramer of two MnmE and two MnmG subunits. K(+) serves as cofactor.

The protein localises to the cytoplasm. Functionally, exhibits a very high intrinsic GTPase hydrolysis rate. Involved in the addition of a carboxymethylaminomethyl (cmnm) group at the wobble position (U34) of certain tRNAs, forming tRNA-cmnm(5)s(2)U34. The protein is tRNA modification GTPase MnmE of Burkholderia ambifaria (strain MC40-6).